The following is an 862-amino-acid chain: Protein SEY1 (862 aa).

At 1–747 (MVSNGHFASA…KRSAIGGMTQ (747 aa)) the chain is on the cytoplasmic side. The GB1/RHD3-type G domain occupies 49 to 306 (GFNYHLISVF…IPADGFAVYA (258 aa)). Position 59–66 (59–66 (GSQSTGKS)) interacts with GTP. Residues 481 to 507 (SNYTQELALYQKDLEKISAQLRKDEMR) are a coiled coil. A helical membrane pass occupies residues 748 to 768 (IPVYFYILLLALGWNEIVAVL). Residues 769-771 (RNP) are Lumenal-facing. The chain crosses the membrane as a helical span at residues 772–792 (LYFFMLFLCAVGAFVTYQLNL). Residues 793–862 (WGPMIKMAEA…DDDDEDEGSW (70 aa)) lie on the Cytoplasmic side of the membrane. Positions 819 to 862 (LEPSEAGPHAARYKNSTEEYEMSNVKAPQRTNSGDDDDEDEGSW) are disordered. Over residues 852 to 862 (GDDDDEDEGSW) the composition is skewed to acidic residues.

The protein belongs to the TRAFAC class dynamin-like GTPase superfamily. GB1/RHD3 GTPase family. RHD3 subfamily.

The protein resides in the endoplasmic reticulum membrane. Functionally, cooperates with the reticulon proteins and tubule-shaping DP1 family proteins to generate and maintain the structure of the tubular endoplasmic reticulum network. Has GTPase activity, which is required for its function in ER organization. In Uncinocarpus reesii (strain UAMH 1704), this protein is Protein SEY1.